A 421-amino-acid polypeptide reads, in one-letter code: Glutamyl-tRNA reductase (421 aa).

Substrate-binding positions include T49–R52, S109, E114–Q116, and Q120. The Nucleophile role is filled by C50. An NADP(+)-binding site is contributed by G189 to G194.

The protein belongs to the glutamyl-tRNA reductase family. In terms of assembly, homodimer.

The enzyme catalyses (S)-4-amino-5-oxopentanoate + tRNA(Glu) + NADP(+) = L-glutamyl-tRNA(Glu) + NADPH + H(+). Its pathway is porphyrin-containing compound metabolism; protoporphyrin-IX biosynthesis; 5-aminolevulinate from L-glutamyl-tRNA(Glu): step 1/2. Catalyzes the NADPH-dependent reduction of glutamyl-tRNA(Glu) to glutamate 1-semialdehyde (GSA). In Limosilactobacillus reuteri (strain DSM 20016) (Lactobacillus reuteri), this protein is Glutamyl-tRNA reductase.